The primary structure comprises 250 residues: Proteasome subunit alpha type-7-A (250 aa).

Lys-62 participates in a covalent cross-link: Glycyl lysine isopeptide (Lys-Gly) (interchain with G-Cter in ubiquitin).

Belongs to the peptidase T1A family. As to quaternary structure, component of the 20S core complex of the 26S proteasome. The 26S proteasome is composed of a core protease (CP), known as the 20S proteasome, capped at one or both ends by the 19S regulatory particle (RP/PA700). The 20S proteasome core is composed of 28 subunits that are arranged in four stacked rings, resulting in a barrel-shaped structure. The two end rings are each formed by seven alpha subunits, and the two central rings are each formed by seven beta subunits. The catalytic chamber with the active sites is on the inside of the barrel. Interacts with KIN10 and KIN11 SnRK subunits, and with the SKP1A/ASK1 subunit of the SCF E3 ubiquitin ligase complex. As to expression, expressed in roots, leaves and flowers.

Its subcellular location is the cytoplasm. It localises to the nucleus. Functionally, the proteasome is a multicatalytic proteinase complex which is characterized by its ability to cleave peptides with Arg, Phe, Tyr, Leu, and Glu adjacent to the leaving group at neutral or slightly basic pH. The proteasome has an ATP-dependent proteolytic activity. Mediates the association of the SCF(TIR1) E3 ubiquitin ligase complex with the proteasome. This chain is Proteasome subunit alpha type-7-A (PAD1), found in Arabidopsis thaliana (Mouse-ear cress).